A 199-amino-acid chain; its full sequence is NAD(P)H dehydrogenase (quinone) (199 aa).

The region spanning 4-190 (MLVLYYSAYG…DGARFQGRRV (187 aa)) is the Flavodoxin-like domain. FMN contacts are provided by residues 10 to 15 (SAYGHM) and 78 to 80 (TRY). Position 12 (Tyr-12) interacts with NAD(+). Residue Trp-98 coordinates substrate. FMN is bound by residues 113–119 (STATQYG) and His-134. The tract at residues 162 to 181 (GMTTTADGDGSRQPSAQELD) is disordered. Over residues 163–177 (MTTTADGDGSRQPSA) the composition is skewed to polar residues.

The protein belongs to the WrbA family. Requires FMN as cofactor.

It carries out the reaction a quinone + NADH + H(+) = a quinol + NAD(+). The catalysed reaction is a quinone + NADPH + H(+) = a quinol + NADP(+). The polypeptide is NAD(P)H dehydrogenase (quinone) (Brucella suis (strain ATCC 23445 / NCTC 10510)).